The chain runs to 594 residues: UvrABC system protein C (594 aa).

Residues 17–94 form the GIY-YIG domain; the sequence is LEPGCYLMKD…IKQYQPRYNI (78 aa). Residues 199 to 234 enclose the UVR domain; the sequence is KTILNHLEERMNKASEQLDFEQAKEYRDMIQHIHNL.

Belongs to the UvrC family. Interacts with UvrB in an incision complex.

Its subcellular location is the cytoplasm. The UvrABC repair system catalyzes the recognition and processing of DNA lesions. UvrC both incises the 5' and 3' sides of the lesion. The N-terminal half is responsible for the 3' incision and the C-terminal half is responsible for the 5' incision. This is UvrABC system protein C from Staphylococcus epidermidis (strain ATCC 35984 / DSM 28319 / BCRC 17069 / CCUG 31568 / BM 3577 / RP62A).